Reading from the N-terminus, the 480-residue chain is Beta-glucosidase A (480 aa).

Glu-177 acts as the Proton donor in catalysis. The Nucleophile role is filled by Glu-378.

Belongs to the glycosyl hydrolase 1 family.

It carries out the reaction Hydrolysis of terminal, non-reducing beta-D-glucosyl residues with release of beta-D-glucose.. This chain is Beta-glucosidase A (bglA), found in Enterobacter agglomerans (Erwinia herbicola).